The following is a 362-amino-acid chain: Glucuronokinase 1 (362 aa).

An ATP-binding site is contributed by 126 to 136; the sequence is PRQTGLSGSSA. Residue aspartate 179 is the Proton acceptor of the active site.

It belongs to the GHMP kinase family. Requires Mg(2+) as cofactor. The cofactor is Mn(2+). Co(2+) serves as cofactor. In terms of tissue distribution, highly expressed in pollen. Detected in seedlings, inflorescences, seeds, leaves and roots.

The catalysed reaction is D-glucuronate + ATP = 1-phospho-alpha-D-glucuronate + ADP + H(+). Sugar-1-kinase with a strict substrate specificity for D-glucuronic acid and ATP. Involved in the biosynthesis of UDP-glucuronic acid (UDP-GlcA), providing nucleotide sugars for cell-wall polymers. May be also involved in a salvage pathway for glucuronic acid. The protein is Glucuronokinase 1 (GLCAK1) of Arabidopsis thaliana (Mouse-ear cress).